Reading from the N-terminus, the 427-residue chain is 2-oxoglutarate and iron-dependent oxygenase JMJD4 (427 aa).

Residues 147 to 306 form the JmjC domain; sequence SLVNDLEDIF…NMWHFLQQEL (160 aa). Residues His-194, Asp-196, and His-274 each contribute to the Fe cation site.

It belongs to the JMJD6 family. Interacts with ETF1. Interacts with the ETF1-GSPT1 complex. The cofactor is Fe(2+).

The protein localises to the cytoplasm. It carries out the reaction L-lysyl-[protein] + 2-oxoglutarate + O2 = 4-hydroxy-L-lysyl-[protein] + succinate + CO2. Catalyzes the 2-oxoglutarate and iron-dependent C4-lysyl hydroxylation of ETF1 at 'Lys-63' thereby promoting the translational termination efficiency of ETF1. Not essential for embryonic stem cell (ESC) maintenance and the embryonic and postnatal development. This is 2-oxoglutarate and iron-dependent oxygenase JMJD4 (Jmjd4) from Mus musculus (Mouse).